The chain runs to 226 residues: Endonuclease V (226 aa).

Mg(2+) contacts are provided by aspartate 42 and aspartate 110.

The protein belongs to the endonuclease V family. Requires Mg(2+) as cofactor.

The protein localises to the cytoplasm. The catalysed reaction is Endonucleolytic cleavage at apurinic or apyrimidinic sites to products with a 5'-phosphate.. Functionally, DNA repair enzyme involved in the repair of deaminated bases. Selectively cleaves double-stranded DNA at the second phosphodiester bond 3' to a deoxyinosine leaving behind the intact lesion on the nicked DNA. The polypeptide is Endonuclease V (Thermus thermophilus (strain ATCC BAA-163 / DSM 7039 / HB27)).